Here is a 100-residue protein sequence, read N- to C-terminus: MSLNAYLVLAAMLFTIGVFGIFLNRKNVISIMMSIELMLLAVNINFVAFSHYLHDLTGQIFTFFVVTVAAAEAAIGLAILVTFFRNRTTINVEEIDTLKG.

3 helical membrane passes run 3–23 (LNAY…GIFL), 29–49 (ISIM…FVAF), and 60–80 (IFTF…LAIL).

It belongs to the complex I subunit 4L family. NDH-1 is composed of 14 different subunits. Subunits NuoA, H, J, K, L, M, N constitute the membrane sector of the complex.

Its subcellular location is the cell inner membrane. The enzyme catalyses a quinone + NADH + 5 H(+)(in) = a quinol + NAD(+) + 4 H(+)(out). Functionally, NDH-1 shuttles electrons from NADH, via FMN and iron-sulfur (Fe-S) centers, to quinones in the respiratory chain. The immediate electron acceptor for the enzyme in this species is believed to be ubiquinone. Couples the redox reaction to proton translocation (for every two electrons transferred, four hydrogen ions are translocated across the cytoplasmic membrane), and thus conserves the redox energy in a proton gradient. The protein is NADH-quinone oxidoreductase subunit K of Magnetococcus marinus (strain ATCC BAA-1437 / JCM 17883 / MC-1).